The following is a 353-amino-acid chain: D-alanine--D-alanine ligase A (353 aa).

An ATP-grasp domain is found at Lys141–Ala346. ATP is bound at residue Glu169–Glu224. Asp300, Glu313, and Asn315 together coordinate Mg(2+).

Belongs to the D-alanine--D-alanine ligase family. Requires Mg(2+) as cofactor. It depends on Mn(2+) as a cofactor.

It is found in the cytoplasm. The enzyme catalyses 2 D-alanine + ATP = D-alanyl-D-alanine + ADP + phosphate + H(+). Its pathway is cell wall biogenesis; peptidoglycan biosynthesis. Cell wall formation. In Brucella melitensis biotype 1 (strain ATCC 23456 / CCUG 17765 / NCTC 10094 / 16M), this protein is D-alanine--D-alanine ligase A.